The primary structure comprises 434 residues: O-phosphoseryl-tRNA(Sec) selenium transferase (434 aa).

Residues 1–40 are tetramerization; that stretch reads MGLNITGLIPKHMENRGKLTLKENLKIIENILEQRKAPEN. Arg71 is a pyridoxal 5'-phosphate binding site. Residues 92–102 are phosphate loop (P-loop); that stretch reads GRSGNLIDPQP. 3 residues coordinate substrate: Arg93, Ser94, and Gln101. Lys277 is subject to N6-(pyridoxal phosphate)lysine. Substrate is bound at residue Arg306.

This sequence belongs to the SepSecS family. In terms of assembly, homotetramer. Requires pyridoxal 5'-phosphate as cofactor.

The catalysed reaction is O-phospho-L-seryl-tRNA(Sec) + selenophosphate + H2O = L-selenocysteinyl-tRNA(Sec) + 2 phosphate. The protein operates within aminoacyl-tRNA biosynthesis; selenocysteinyl-tRNA(Sec) biosynthesis; selenocysteinyl-tRNA(Sec) from L-seryl-tRNA(Sec) (archaeal/eukaryal route): step 2/2. Its function is as follows. Converts O-phosphoseryl-tRNA(Sec) to selenocysteinyl-tRNA(Sec) required for selenoprotein biosynthesis. This is O-phosphoseryl-tRNA(Sec) selenium transferase (spcS) from Methanocaldococcus jannaschii (strain ATCC 43067 / DSM 2661 / JAL-1 / JCM 10045 / NBRC 100440) (Methanococcus jannaschii).